A 382-amino-acid chain; its full sequence is Intermediate transcription factor 3 large subunit (382 aa).

It belongs to the orthopoxvirus OPG150 family. In terms of assembly, heterodimerizes with protein A8 to form the virus intermediate transcription factor (VITF)-3.

Functionally, acts with RNA polymerase to initiate transcription from intermediate gene promoters. This is Intermediate transcription factor 3 large subunit (OPG150) from Cynomys gunnisoni (Gunnison's prairie dog).